We begin with the raw amino-acid sequence, 642 residues long: Threonine--tRNA ligase (642 aa).

One can recognise a TGS domain in the interval 1-61 (MPVITLPDGS…ETDVDLAIIT (61 aa)). The tract at residues 243-534 (DHRKIGKQLD…LIEEYAGKFP (292 aa)) is catalytic. Positions 334, 385, and 511 each coordinate Zn(2+).

The protein belongs to the class-II aminoacyl-tRNA synthetase family. Homodimer. Zn(2+) is required as a cofactor.

It localises to the cytoplasm. The enzyme catalyses tRNA(Thr) + L-threonine + ATP = L-threonyl-tRNA(Thr) + AMP + diphosphate + H(+). In terms of biological role, catalyzes the attachment of threonine to tRNA(Thr) in a two-step reaction: L-threonine is first activated by ATP to form Thr-AMP and then transferred to the acceptor end of tRNA(Thr). Also edits incorrectly charged L-seryl-tRNA(Thr). The polypeptide is Threonine--tRNA ligase (Shewanella loihica (strain ATCC BAA-1088 / PV-4)).